The chain runs to 615 residues: AP-1-like transcription factor yap1 (615 aa).

The segment covering 27 to 50 has biased composition (polar residues); that stretch reads SSNNPTQKQQTVTHNSEANQNLNH. Disordered regions lie at residues 27-84 and 99-180; these read SSNN…EDSP and NESL…RKEK. The Bipartite nuclear localization signal motif lies at 35–42; sequence QQTVTHNS. Over residues 52–67 the composition is skewed to low complexity; that stretch reads PGHASSGSFSVSPPSG. Residues 68–75 carry the Bipartite nuclear localization signal motif; that stretch reads LDGSVNQS. Positions 118–147 are enriched in basic and acidic residues; the sequence is PGDKRKDIDGQVNDKEDSGKKRRESDEKAA. Positions 157-220 constitute a bZIP domain; it reads SEPTSKRKAQ…ERLQLELKEY (64 aa). The tract at residues 162–183 is basic motif; the sequence is KRKAQNRAAQRAFRERKEKHLK. Residues 185–192 are leucine-zipper; that stretch reads LEAKVEEL. The interval 214–364 is transcription activation 1; that stretch reads QLELKEYRKR…RGYQVNSSYS (151 aa). A compositionally biased stretch (polar residues) spans 270–294; sequence LFTNTQTSKSNQNKAKDNPTATPRS. The interval 270–416 is disordered; it reads LFTNTQTSKS…AVKATESSTP (147 aa). Positions 289 to 301 are n-CRD; the sequence is TATPRSEAQVPGV. Residues 310–321 are compositionally biased toward low complexity; the sequence is SSPNGLSNGPSP. Composition is skewed to polar residues over residues 322-344 and 358-369; these read AKST…SGTL and QVNSSYSASTKQ. Over residues 372–394 the composition is skewed to low complexity; the sequence is HDTPSSDSPSSSSDSHQSQLLSS. The segment at 409 to 508 is transcription activation 2; the sequence is KATESSTPHA…SQDFGTFFDD (100 aa). 3 cysteine pairs are disulfide-bonded: Cys-562–Cys-586, Cys-562–Cys-595, and Cys-586–Cys-595. Residues 562-595 are c-CRD; the sequence is CNKIWDRLQSMEKFRNGEIDVDNLCSELRTKARC. A Nuclear export signal motif is present at residues 580-587; sequence IDVDNLCS.

The protein belongs to the bZIP family. YAP subfamily. Post-translationally, depending on the oxidative stress inducing agent, yap1 can undergo two distinct conformational changes, both involving disulfide bond formation, and both masking the nuclear export signal, thus abolishing nuclear export.

The protein localises to the nucleus. Its subcellular location is the cytoplasm. In terms of biological role, transcription activator involved in oxidative stress response and redox homeostasis. Regulates the transcription of genes encoding antioxidant enzymes and components of the cellular thiol-reducing pathways, including thioredoxin peroxidase (aspF3), cytochrome peroxidase, and the protein AFUA_3G00730, which appears to belong to the glutathione S-transferase family. Proteins of the protein degradation pathway are also regulated by yap1, as well the p-nitroreductase family protein AFUA_5G09910. May be involved in antifungal resistance to voriconazole. The protein is AP-1-like transcription factor yap1 of Aspergillus fumigatus (strain ATCC MYA-4609 / CBS 101355 / FGSC A1100 / Af293) (Neosartorya fumigata).